The sequence spans 251 residues: tRNA pseudouridine synthase A (251 aa).

Aspartate 54 functions as the Nucleophile in the catalytic mechanism. Tyrosine 111 contacts substrate.

This sequence belongs to the tRNA pseudouridine synthase TruA family. Homodimer.

It catalyses the reaction uridine(38/39/40) in tRNA = pseudouridine(38/39/40) in tRNA. Formation of pseudouridine at positions 38, 39 and 40 in the anticodon stem and loop of transfer RNAs. The polypeptide is tRNA pseudouridine synthase A (Mycoplasma mycoides subsp. mycoides SC (strain CCUG 32753 / NCTC 10114 / PG1)).